A 722-amino-acid polypeptide reads, in one-letter code: MARELMPKSGIMMPHVVVTRDAAVVGVSTVDGQAGAIDLTGKYLQKTDAAATYQTKTEGASKDFVLDSIQPIMSGALFREDPWVVNDTPFRSTGANGVESVDMMKVTPDNSIKIGSYASSVQGVEIHSAGRLQVVDQNDSGVETKYPVYSKRYRPEIEDLPFAAIGSYVKDSKGRTIGVNRTGINSDIKQLTQKVTFTQPVTVPDAVGDYDAVTLRQLRNSGGGSGGPTMSGISNFGIGDFHLRDSRAFIPAFEVVSDGQLLNRADYPDLWAYAQLLSPIEDSEWVSNVYQRGKYSKGNGTTTFRVPDRNGVQSGSIQGLFGRGDAGSSGSNGVVSDSGAPNITYSSPHTMVTLASASGQVATNGAIQSITSTDDVAPVGTGGKYISTNFDASRSSAVYGRSLSEVVPRNFIGVWTIRAHGGFTAANTSWSVINSDASEQPTGTPITGGLVSSKYVVGGVDKYRSSIQLLGSNEVDLSTRITTINDRYAIGAATWDFKLDGKLLFNKSLTPKGTGESPGNTYLTLANTWMSAAYSGYIGFVGGGVGVSNGGWRNFISLGSLIFPDSSHPTAVISQVYDYDLSTGSQPNGDIVRNTYFSAESYDITFGNNSGTTNYIFSKSPVSDERLKHSIKEEGTATALSNLNKMEYKTFIYNYDEKATVRRGFIAQQLEAIDPQYVRKYKTFKGTDTLALDENVLLLDAIAAIQELTKKVEVLEAKLAEK.

Positions 623–719 constitute a Peptidase S74 domain; the sequence is SDERLKHSIK…KKVEVLEAKL (97 aa).

The protein resides in the virion. Functionally, probable tail fiber protein. The chain is Probable tail fiber protein from Escherichia coli (Escherichia coli phage phi32).